Consider the following 1341-residue polypeptide: WD repeat-containing protein 19 (1341 aa).

WD repeat units follow at residues 11-51 (SWLG…RSEI), 52-92 (SLPG…TSQL), 95-134 (GMRD…KIPV), 137-175 (KHTK…IRQT), 273-311 (DHKD…DMYA), and 317-356 (DENK…LGDA). 6 TPR repeats span residues 736 to 769 (AQDL…AKRL), 775 to 808 (PFIS…DNKE), 840 to 873 (RVLK…DRAA), 895 to 928 (PKIH…NSVI), 951 to 984 (LDGA…NEAF), and 1020 to 1053 (EKRH…EDNV).

As to quaternary structure, component of the IFT complex A (IFT-A) complex. IFT-A complex is divided into a core subcomplex composed of IFT122:IFT140:WDR19 which is associated with TULP3 and a peripheral subcomplex composed of IFT43:WDR35:TTC21B. Interacts (via C-terminal region) with IFT122 (via C-terminal region). Interacts with BBS1. Interacts with TTC25. As to expression, tissue-specific expression of isoforms. Expressed in the prostate, testis, epididymis, submaxillary and salivary glands. Expressed in ependymal cells lining brain ventricles (at protein level).

It is found in the cell projection. Its subcellular location is the cilium. The protein resides in the cytoplasm. The protein localises to the cytoskeleton. It localises to the cilium basal body. It is found in the photoreceptor outer segment. Its subcellular location is the flagellum. Functionally, as component of the IFT complex A (IFT-A), a complex required for retrograde ciliary transport and entry into cilia of G protein-coupled receptors (GPCRs), it is involved in cilia function and/or assembly. Essential for functional IFT-A assembly and ciliary entry of GPCRs. Associates with the BBSome complex to mediate ciliary transport. The protein is WD repeat-containing protein 19 of Mus musculus (Mouse).